Consider the following 830-residue polypeptide: MHYNFKEVERDVQEKWDFTVNVKDVQCYVLEMFPYPSGNIHMGHLRNYTIGDVIARYKRACGLHVFHPIGWDAFGLPAENAALSYNISPQVWTRKNIDNMRSQLKSIGLSYNWDKEFATCDAEYYKYEQEFFLDFLKYGLAYRKESLVNWDPVDQTVLANEQVIDGRGWRSGAIIEKRKLSQWFLKITDFAAELLDDLKSLNQWPEKVKLMQERWIGKSEGVIIDFQIVGINEVLQVFTTSPHTLFGASFIAVSFDHPILKYVNDVQLIQLIDNFDRKDLIDESSINTVEKFGINSGLVARHPLLDVDLPIYVANFVLMNYGTGAVFCCPAHDQRDFDFAKKYSLPIRQVIFPEQNVDLEQEAYVGSGIMGCSGFLDGMTVDDAKKSMIEKLISLGICKKQVYYRLHDWGISRQRYWGCPIPIIYCKKCGIVPVDKKDLPITLPEDIDFTKSGNPLDNHPTWKYTKCPSCGADAKRETDTFDTFFESSWYFAAFCGIGKGIDKDVCNKLLPVDYYIGGIEHAVLHLLYSRFFCRALTRCGYFDVKEPFSSLITQGMVCHSTYLDKYGNYLFPEDGKKMIQEGKYVTVGRAEKMSKSKKNVVHLDDIIDKYGADSARLFILSDTPPERDIEWLDENIEGVSRYLNKLWKMIVDYDQLEQNFVCDNISSDTLEYRINVHKILNDITNDLEFYRFNCAVAKFRELSNVISEMIRLSINHHVVSEAIYILIRVVEPFIPHIAEKLWQIVGGQGMLCNQLWPKVDPQLLIKKNVNIVVQVNGKFIKAVSVPNDIDDDTLKSIALEVAQRRIGNSSVKNIYIIPGRVINIVITKSS.

The short motif at proline 34–histidine 44 is the 'HIGH' region element. The short motif at lysine 592–serine 596 is the 'KMSKS' region element. Position 595 (lysine 595) interacts with ATP.

The protein belongs to the class-I aminoacyl-tRNA synthetase family.

Its subcellular location is the cytoplasm. The catalysed reaction is tRNA(Leu) + L-leucine + ATP = L-leucyl-tRNA(Leu) + AMP + diphosphate. The sequence is that of Leucine--tRNA ligase from Ehrlichia ruminantium (strain Welgevonden).